A 575-amino-acid polypeptide reads, in one-letter code: Septation ring formation regulator EzrA (575 aa).

The Extracellular segment spans residues 1–8; the sequence is MSNGQLIY. Residues 9–27 form a helical membrane-spanning segment; sequence LMVAIAVILVLAYVVAIFL. Residues 28-575 lie on the Cytoplasmic side of the membrane; the sequence is RKRNEGRLEA…YEKTRETIRF (548 aa). Coiled-coil stretches lie at residues 110 to 191, 265 to 301, 354 to 416, and 456 to 526; these read QIDQ…FVTL, LYEAFKKNQENIRQLELDNAEYENGQAQEEINALYDI, VRRI…IEKD, and TASN…IQEA.

It belongs to the EzrA family.

Its subcellular location is the cell membrane. Negative regulator of FtsZ ring formation; modulates the frequency and position of FtsZ ring formation. Inhibits FtsZ ring formation at polar sites. Interacts either with FtsZ or with one of its binding partners to promote depolymerization. This is Septation ring formation regulator EzrA from Streptococcus pneumoniae (strain JJA).